Here is a 997-residue protein sequence, read N- to C-terminus: MAVAGFVFCWPLLGLTIVLLVAPIDAAQRHTASDNPSTYNIGGVLSNSDSEEHFSTTIKHLNFDQQYVPRKVTYYDKTIRMDKNPIKTVFNVCDKLIENRVYAVVVSHEQTSGDLSPAAVSYTSGFYSIPVIGISSRDAAFSDKNIHVSFLRTVPPYYHQADVWLEMLSHFAYTKVIIIHSSDTDGRAILGRFQTTSQTYYDDVDVRATVELIVEFEPKLESFTEHLIDMKTAQSRVYLMYASTEDAQVIFRDAGEYNMTGEGHVWIVTEQALFSNNTPDGVLGLQLEHAHSDKGHIRDSVYVLASAIKEMISNETIAEAPKDCGDSAVNWESGKRLFQYLKSRNITGETGQVAFDDNGDRIYAGYDVINIREQQKKHVVGKFSYDSMRAKMRMRINDSEIIWPGKQRRKPEGIMIPTHLKLLTIEEKPFVYVRRMGDDEFRCEPDERPCPLFNNSDATANEFCCRGYCIDLLIELSKRINFTYDLALSPDGQFGHYILRNSTGAMTLRKEWTGLIGELVNERADMIVAPLTINPERAEYIEFSKPFKYQGITILEKKPSRSSTLVSFLQPFSNTLWILVMVSVHVVALVLYLLDRFSPFGRFKLSHSDSNEEKALNLSSAVWFAWGVLLNSGIGEGTPRSFSARVLGMVWAGFAMIIVASYTANLAAFLVLERPKTKLSGINDARLRNTMENLTCATVKGSSVDMYFRRQVELSNMYRTMEANNYATAEQAIQDVKKGKLMAFIWDSSRLEYEASKDCELVTAGELFGRSGYGIGLQKGSPWTDAVTLAILEFHESGFMEKLDKQWIFHGHVQQNCELFEKTPNTLGLKNMAGVFILVGVGIAGGVGLIIIEVIYKKHQVKKQKRLDIARHAADKWRGTIEKRKTIRASLAMQRQYNVGLNSTHAPGTISLAVDKRRYPRLGQRLGPERAWPGDAADVLRIRRPYELGKPGQSPKVIATNQPGMPMPMLGKTRPQQSVLPPRYSPGYTSDVSHLVV.

An N-terminal signal peptide occupies residues 1–26 (MAVAGFVFCWPLLGLTIVLLVAPIDA). Residues 27–573 (AQRHTASDNP…TLVSFLQPFS (547 aa)) are Extracellular-facing. Asn258, Asn314, Asn345, Asn397, Asn454, Asn481, and Asn501 each carry an N-linked (GlcNAc...) asparagine glycan. Residues 530-532 (PLT) and Arg537 each bind glycine. A helical membrane pass occupies residues 574–594 (NTLWILVMVSVHVVALVLYLL). At 595-651 (DRFSPFGRFKLSHSDSNEEKALNLSSAVWFAWGVLLNSGIGEGTPRSFSARVLGMVW) the chain is on the cytoplasmic side. A helical membrane pass occupies residues 652-672 (AGFAMIIVASYTANLAAFLVL). The Extracellular segment spans residues 673–831 (ERPKTKLSGI…KTPNTLGLKN (159 aa)). N-linked (GlcNAc...) asparagine glycosylation occurs at Asn693. 2 residues coordinate glycine: Ser703 and Asp747. Residues 832–852 (MAGVFILVGVGIAGGVGLIII) form a helical membrane-spanning segment. Residues 853–997 (EVIYKKHQVK…YTSDVSHLVV (145 aa)) are Cytoplasmic-facing. The tract at residues 970–997 (LGKTRPQQSVLPPRYSPGYTSDVSHLVV) is disordered. A compositionally biased stretch (polar residues) spans 987 to 997 (GYTSDVSHLVV).

It belongs to the glutamate-gated ion channel (TC 1.A.10.1) family. In terms of assembly, forms a heteromeric NMDA channel with Nmdar2.

It localises to the cell membrane. It is found in the postsynaptic cell membrane. The protein localises to the postsynaptic density. Functionally, NMDA receptor subtype of glutamate-gated ion channels with high calcium permeability and voltage-dependent sensitivity to magnesium. Mediated by glycine. This protein plays a key role in synaptic plasticity, synaptogenesis, excitotoxicity, memory acquisition and learning. It mediates neuronal functions in glutamate neurotransmission. Is involved in the cell surface targeting of NMDA receptors. Plays a role in associative learning and in long-term memory consolidation. This chain is Glutamate [NMDA] receptor subunit 1, found in Drosophila yakuba (Fruit fly).